The chain runs to 535 residues: Flavin-containing monooxygenase 2 (535 aa).

Ala-2 carries the post-translational modification N-acetylalanine. FAD is bound by residues 9-13 (GAGVS), Glu-32, 40-41 (VW), and 61-62 (NT). Residues 60 to 61 (TN) and 195 to 198 (SGSD) contribute to the NADP(+) site. Residue Lys-492 forms a Glycyl lysine isopeptide (Lys-Gly) (interchain with G-Cter in SUMO) linkage. Residues 510-530 (FSVSFLLKILGLLAVVVAFFC) form a helical membrane-spanning segment.

The protein belongs to the FMO family. The cofactor is FAD. Requires Mg(2+) as cofactor. As to expression, expressed in lung (at protein level). Expressed predominantly in lung, and at a much lesser extent in kidney. Also expressed in fetal lung, but not in liver, kidney and brain.

It localises to the microsome membrane. It is found in the endoplasmic reticulum membrane. Its function is as follows. Catalyzes the oxidative metabolism of numerous xenobiotics, including mainly therapeutic drugs and insecticides that contain a soft nucleophile, most commonly nitrogen and sulfur and participates to their bioactivation. Specifically catalyzes S-oxygenation of sulfur derived compounds such as thioureas-derived compounds, thioetherorganophosphates to their sulfenic acid. In vitro, catalyzes S-oxygenation of the second-line antitubercular drugs thiacetazone (TAZ) and ethionamide (ETA), forming a sulfinic acid and a carbodiimide via a postulated sulfenic acid intermediate. Also catalyzes S-oxygenation of the thioether-containing organophosphate insecticides, phorate and disulfoton. The polypeptide is Flavin-containing monooxygenase 2 (Homo sapiens (Human)).